A 438-amino-acid chain; its full sequence is MSETRTVSMPAADAPTVDAPWPVSVLSGKIKGWIDRLGTAWVEGEITQWGGSGGNVYGKLKDLDVDATISFTVWSSVRAKIPADLGQGARVVALVKPNYWVKGGTLTMQVLEMRHVGLGDLLERLERLRQTLRAEGLFDADRKRRLPFLPGCIGLITGKDSDAEKDVLRNAQLHWPSVRFRVVHTAVQGDRAAGEVTRAIGVLDEDPEVDVIVIARGGGDFQNLLVFSDEKLVRTAAACRTPLVSAIGHEADRPLLDDVADLRASTPTDAAKRVVPDVSEELSRVQQARARIGMRLTSQVRGEIDRIEQLRSRPVLASTSWIVDSRAEELGRYIARSAELAGRVVERGMQQTSELSRQLRTLSPQHVLDRGYAIVQTADGSALRAPADAPDGTGLVLRLAAGALGATSTGPTDDIPSSAARLPASPAPDARPASGPES.

The segment at 406 to 438 (ATSTGPTDDIPSSAARLPASPAPDARPASGPES) is disordered.

It belongs to the XseA family. In terms of assembly, heterooligomer composed of large and small subunits.

The protein localises to the cytoplasm. It carries out the reaction Exonucleolytic cleavage in either 5'- to 3'- or 3'- to 5'-direction to yield nucleoside 5'-phosphates.. Its function is as follows. Bidirectionally degrades single-stranded DNA into large acid-insoluble oligonucleotides, which are then degraded further into small acid-soluble oligonucleotides. This Clavibacter sepedonicus (Clavibacter michiganensis subsp. sepedonicus) protein is Exodeoxyribonuclease 7 large subunit.